Here is a 197-residue protein sequence, read N- to C-terminus: dTTP/UTP pyrophosphatase (197 aa).

D70 functions as the Proton acceptor in the catalytic mechanism.

This sequence belongs to the Maf family. YhdE subfamily. Requires a divalent metal cation as cofactor.

Its subcellular location is the cytoplasm. It carries out the reaction dTTP + H2O = dTMP + diphosphate + H(+). The enzyme catalyses UTP + H2O = UMP + diphosphate + H(+). Functionally, nucleoside triphosphate pyrophosphatase that hydrolyzes dTTP and UTP. May have a dual role in cell division arrest and in preventing the incorporation of modified nucleotides into cellular nucleic acids. The protein is dTTP/UTP pyrophosphatase (yceF) of Shigella dysenteriae serotype 1 (strain Sd197).